A 292-amino-acid chain; its full sequence is 2-(5''-triphosphoribosyl)-3'-dephosphocoenzyme-A synthase (292 aa).

The protein belongs to the CitG/MdcB family.

The enzyme catalyses 3'-dephospho-CoA + ATP = 2'-(5''-triphospho-alpha-D-ribosyl)-3'-dephospho-CoA + adenine. In terms of biological role, catalyzes the formation of 2-(5''-triphosphoribosyl)-3'-dephosphocoenzyme-A, the precursor of the prosthetic group of the holo-acyl carrier protein (gamma chain) of citrate lyase, from ATP and dephospho-CoA. The protein is 2-(5''-triphosphoribosyl)-3'-dephosphocoenzyme-A synthase of Escherichia coli (strain UTI89 / UPEC).